Reading from the N-terminus, the 236-residue chain is Leucyl/phenylalanyl-tRNA--protein transferase (236 aa).

The protein belongs to the L/F-transferase family.

Its subcellular location is the cytoplasm. It carries out the reaction N-terminal L-lysyl-[protein] + L-leucyl-tRNA(Leu) = N-terminal L-leucyl-L-lysyl-[protein] + tRNA(Leu) + H(+). The enzyme catalyses N-terminal L-arginyl-[protein] + L-leucyl-tRNA(Leu) = N-terminal L-leucyl-L-arginyl-[protein] + tRNA(Leu) + H(+). The catalysed reaction is L-phenylalanyl-tRNA(Phe) + an N-terminal L-alpha-aminoacyl-[protein] = an N-terminal L-phenylalanyl-L-alpha-aminoacyl-[protein] + tRNA(Phe). Functionally, functions in the N-end rule pathway of protein degradation where it conjugates Leu, Phe and, less efficiently, Met from aminoacyl-tRNAs to the N-termini of proteins containing an N-terminal arginine or lysine. In Nitrosomonas europaea (strain ATCC 19718 / CIP 103999 / KCTC 2705 / NBRC 14298), this protein is Leucyl/phenylalanyl-tRNA--protein transferase.